A 424-amino-acid chain; its full sequence is Serine hydroxymethyltransferase (424 aa).

(6S)-5,6,7,8-tetrahydrofolate contacts are provided by residues Leu118 and 122–124; that span reads GHL. Lys227 bears the N6-(pyridoxal phosphate)lysine mark. 351-353 is a binding site for (6S)-5,6,7,8-tetrahydrofolate; sequence SPF.

The protein belongs to the SHMT family. Homodimer. Requires pyridoxal 5'-phosphate as cofactor.

The protein localises to the cytoplasm. The catalysed reaction is (6R)-5,10-methylene-5,6,7,8-tetrahydrofolate + glycine + H2O = (6S)-5,6,7,8-tetrahydrofolate + L-serine. Its pathway is one-carbon metabolism; tetrahydrofolate interconversion. The protein operates within amino-acid biosynthesis; glycine biosynthesis; glycine from L-serine: step 1/1. In terms of biological role, catalyzes the reversible interconversion of serine and glycine with tetrahydrofolate (THF) serving as the one-carbon carrier. This reaction serves as the major source of one-carbon groups required for the biosynthesis of purines, thymidylate, methionine, and other important biomolecules. Also exhibits THF-independent aldolase activity toward beta-hydroxyamino acids, producing glycine and aldehydes, via a retro-aldol mechanism. The polypeptide is Serine hydroxymethyltransferase (Thermosipho melanesiensis (strain DSM 12029 / CIP 104789 / BI429)).